The sequence spans 897 residues: Major intrinsically disordered Notch2-binding receptor 1 (897 aa).

The Cytoplasmic segment spans residues 1 to 872 (MDAMPEYSLF…AEFRRAKACK (872 aa)). Disordered stretches follow at residues 405–433 (AKDK…SVAC), 450–502 (SINC…EDSE), and 688–766 (TRRS…PPKD). Composition is skewed to polar residues over residues 411 to 423 (ASPS…SNGS) and 452 to 471 (NCPS…GTQT). The segment covering 472 to 498 (EQHESRKVKDYPSQNKFKERPPFKHSE) has biased composition (basic and acidic residues). The span at 697–724 (EENSATESKVASITNSPRDWRTVSYSSH) shows a compositional bias: polar residues. Positions 725-756 (NGEEGKERDRHSEGKERHRKSREAERQYEAHQ) are enriched in basic and acidic residues. A helical membrane pass occupies residues 873 to 893 (IGALIFAAACTVILVIVVPIC). Over 894–897 (TMKS) the chain is Extracellular.

It belongs to the MINAR family.

It is found in the cell membrane. Intrinsically disordered protein which may negatively regulate mTOR signaling pathway by stabilizing the mTOR complex component DEPTOR. Negatively regulates angiogenesis. Negatively regulates cell growth. May play a role in neuronal development. The sequence is that of Major intrinsically disordered Notch2-binding receptor 1 (minar1) from Danio rerio (Zebrafish).